The primary structure comprises 417 residues: UDP-N-acetylglucosamine 1-carboxyvinyltransferase (417 aa).

Position 23-24 (23-24 (KN)) interacts with phosphoenolpyruvate. Arginine 93 is a UDP-N-acetyl-alpha-D-glucosamine binding site. The active-site Proton donor is aspartate 117. UDP-N-acetyl-alpha-D-glucosamine is bound by residues aspartate 305 and valine 327.

It belongs to the EPSP synthase family. MurA subfamily.

The protein resides in the cytoplasm. It catalyses the reaction phosphoenolpyruvate + UDP-N-acetyl-alpha-D-glucosamine = UDP-N-acetyl-3-O-(1-carboxyvinyl)-alpha-D-glucosamine + phosphate. Its pathway is cell wall biogenesis; peptidoglycan biosynthesis. Its function is as follows. Cell wall formation. Adds enolpyruvyl to UDP-N-acetylglucosamine. In Mycolicibacterium paratuberculosis (strain ATCC BAA-968 / K-10) (Mycobacterium paratuberculosis), this protein is UDP-N-acetylglucosamine 1-carboxyvinyltransferase.